The primary structure comprises 489 residues: GTPase Der (489 aa).

EngA-type G domains are found at residues 30 to 199 and 227 to 403; these read PVVS…KDKP and FRLA…SRSH. GTP is bound by residues 36-43, 85-89, 151-154, 233-240, 280-284, and 345-348; these read GRQNVGKS, DTPGL, NKAD, GKPNSGKS, DTAGI, and NKWD. The KH-like domain occupies 404–488; the sequence is RKVSTSELNK…PIRLEFRSDR (85 aa).

Belongs to the TRAFAC class TrmE-Era-EngA-EngB-Septin-like GTPase superfamily. EngA (Der) GTPase family. As to quaternary structure, associates with the 50S ribosomal subunit.

Functionally, GTPase that plays an essential role in the late steps of ribosome biogenesis. This Leptospira interrogans serogroup Icterohaemorrhagiae serovar Lai (strain 56601) protein is GTPase Der.